We begin with the raw amino-acid sequence, 135 residues long: Ribosome-binding factor A (135 aa).

Belongs to the RbfA family. In terms of assembly, monomer. Binds 30S ribosomal subunits, but not 50S ribosomal subunits or 70S ribosomes.

It is found in the cytoplasm. Functionally, one of several proteins that assist in the late maturation steps of the functional core of the 30S ribosomal subunit. Associates with free 30S ribosomal subunits (but not with 30S subunits that are part of 70S ribosomes or polysomes). Required for efficient processing of 16S rRNA. May interact with the 5'-terminal helix region of 16S rRNA. The sequence is that of Ribosome-binding factor A from Bartonella henselae (strain ATCC 49882 / DSM 28221 / CCUG 30454 / Houston 1) (Rochalimaea henselae).